Here is a 261-residue protein sequence, read N- to C-terminus: uncharacterized protein (261 aa).

41-48 provides a ligand contact to ATP; that stretch reads GKSGSGKS.

The protein belongs to the IIV-6 075L family.

This is an uncharacterized protein from Invertebrate iridescent virus 3 (IIV-3).